The primary structure comprises 62 residues: MKFIDLKDKDIAELQKMLKEKKSLLFEKRLQLKTMQLTNPSEIKVIRKDIARINTALSAKKD.

Belongs to the universal ribosomal protein uL29 family.

This chain is Large ribosomal subunit protein uL29, found in Helicobacter hepaticus (strain ATCC 51449 / 3B1).